Consider the following 359-residue polypeptide: Golgi-resident adenosine 3',5'-bisphosphate 3'-phosphatase (359 aa).

The residue at position 1 (methionine 1) is an N-acetylmethionine. At 1–12 (MAPMGIRLSPLG) the chain is on the cytoplasmic side. The chain crosses the membrane as a helical span at residues 13 to 33 (VAVFCLLGLGVLYHLYSGFLA). Residues 34–359 (GRFSLFGLGG…LPDLEKTGHK (326 aa)) are Lumenal-facing. The interval 86 to 106 (ESNVLHEKSKGKTREGAEDKM) is disordered. The active-site Proton acceptor is aspartate 110. Mg(2+) is bound by residues glutamate 133, aspartate 174, leucine 176, and aspartate 177. Residue threonine 179 is the Proton acceptor of the active site. Positions 242 and 245 each coordinate AMP. An N-linked (GlcNAc...) asparagine glycan is attached at asparagine 259. Residues glycine 268 and lysine 272 each contribute to the AMP site. Aspartate 300 is a binding site for Mg(2+).

Belongs to the inositol monophosphatase superfamily. Mg(2+) is required as a cofactor. Contains N-linked glycan resistant to endoglycosydase H.

The protein resides in the golgi apparatus. It is found in the trans-Golgi network membrane. The catalysed reaction is adenosine 3',5'-bisphosphate + H2O = AMP + phosphate. It participates in sulfur metabolism. Strongly inhibited by lithium. Functionally, exhibits 3'-nucleotidase activity toward adenosine 3',5'-bisphosphate (PAP), namely hydrolyzes adenosine 3',5'-bisphosphate into adenosine 5'-monophosphate (AMP) and a phosphate. May play a role in the formation of skeletal elements derived through endochondral ossification, possibly by clearing adenosine 3',5'-bisphosphate produced by Golgi sulfotransferases during glycosaminoglycan sulfation. Has no activity toward 3'-phosphoadenosine 5'-phosphosulfate (PAPS) or inositol phosphate (IP) substrates including I(1)P, I(1,4)P2, I(1,3,4)P3, I(1,4,5)P3 and I(1,3,4,5)P4. The protein is Golgi-resident adenosine 3',5'-bisphosphate 3'-phosphatase of Homo sapiens (Human).